The chain runs to 339 residues: Glyceraldehyde-3-phosphate dehydrogenase (339 aa).

Residues 11–12 (TI) and Gly110 contribute to the NAD(+) site. A D-glyceraldehyde 3-phosphate-binding site is contributed by 139–141 (SCN). Cys140 serves as the catalytic Nucleophile. Arg168 contacts NAD(+). 194–195 (HG) lines the D-glyceraldehyde 3-phosphate pocket. Gln301 provides a ligand contact to NAD(+).

Belongs to the glyceraldehyde-3-phosphate dehydrogenase family. Homotetramer.

It localises to the cytoplasm. It catalyses the reaction D-glyceraldehyde 3-phosphate + phosphate + NADP(+) = (2R)-3-phospho-glyceroyl phosphate + NADPH + H(+). The enzyme catalyses D-glyceraldehyde 3-phosphate + phosphate + NAD(+) = (2R)-3-phospho-glyceroyl phosphate + NADH + H(+). Its pathway is carbohydrate degradation; glycolysis; pyruvate from D-glyceraldehyde 3-phosphate: step 1/5. The chain is Glyceraldehyde-3-phosphate dehydrogenase from Methanospirillum hungatei JF-1 (strain ATCC 27890 / DSM 864 / NBRC 100397 / JF-1).